An 842-amino-acid chain; its full sequence is Leucine--tRNA ligase (842 aa).

The short motif at 44–55 (PYPSANGLHVGH) is the 'HIGH' region element. The 'KMSKS' region signature appears at 619–623 (KMSKS). Position 622 (K622) interacts with ATP.

This sequence belongs to the class-I aminoacyl-tRNA synthetase family.

Its subcellular location is the cytoplasm. The catalysed reaction is tRNA(Leu) + L-leucine + ATP = L-leucyl-tRNA(Leu) + AMP + diphosphate. This is Leucine--tRNA ligase from Borrelia hermsii (strain HS1 / DAH).